Here is a 102-residue protein sequence, read N- to C-terminus: NADH-quinone oxidoreductase subunit K 1 (102 aa).

Helical transmembrane passes span 5–25 (LLHV…CVLV), 30–50 (IIMM…AFVG), and 62–82 (VFAL…LALV).

It belongs to the complex I subunit 4L family. NDH-1 is composed of 14 different subunits. Subunits NuoA, H, J, K, L, M, N constitute the membrane sector of the complex.

It localises to the cell inner membrane. It carries out the reaction a quinone + NADH + 5 H(+)(in) = a quinol + NAD(+) + 4 H(+)(out). Functionally, NDH-1 shuttles electrons from NADH, via FMN and iron-sulfur (Fe-S) centers, to quinones in the respiratory chain. The immediate electron acceptor for the enzyme in this species is believed to be ubiquinone. Couples the redox reaction to proton translocation (for every two electrons transferred, four hydrogen ions are translocated across the cytoplasmic membrane), and thus conserves the redox energy in a proton gradient. The sequence is that of NADH-quinone oxidoreductase subunit K 1 from Geotalea uraniireducens (strain Rf4) (Geobacter uraniireducens).